Here is a 415-residue protein sequence, read N- to C-terminus: Hepatocyte nuclear factor 3-beta (415 aa).

The segment at residues 150-244 is a DNA-binding region (fork-head); the sequence is KPPYSYISLI…ENGCYLRRQK (95 aa). Basic and acidic residues predominate over residues 251–262; it reads KMSMKEPGRKGG. Residues 251–324 are disordered; the sequence is KMSMKEPGRK…GQHLMSQHHS (74 aa). The span at 266–277 shows a compositional bias: low complexity; it reads SANSSSDSCNGN. The span at 310-323 shows a compositional bias: polar residues; that stretch reads SPVSQGQHLMSQHH.

The protein localises to the nucleus. Its function is as follows. Transcription activator for a number of liver genes. Interacts with the cis-acting regulatory regions of these genes. The chain is Hepatocyte nuclear factor 3-beta (foxa2) from Oryzias latipes (Japanese rice fish).